A 273-amino-acid chain; its full sequence is Phosphate import ATP-binding protein PstB (273 aa).

The ABC transporter domain maps to 27–268 (VTVRDLNFYY…PSDRRTQDYI (242 aa)). 59 to 66 (GPSGCGKS) provides a ligand contact to ATP.

This sequence belongs to the ABC transporter superfamily. Phosphate importer (TC 3.A.1.7) family. The complex is composed of two ATP-binding proteins (PstB), two transmembrane proteins (PstC and PstA) and a solute-binding protein (PstS).

The protein resides in the cell inner membrane. The catalysed reaction is phosphate(out) + ATP + H2O = ADP + 2 phosphate(in) + H(+). In terms of biological role, part of the ABC transporter complex PstSACB involved in phosphate import. Responsible for energy coupling to the transport system. The chain is Phosphate import ATP-binding protein PstB from Rhodopseudomonas palustris (strain ATCC BAA-98 / CGA009).